The chain runs to 1179 residues: Calcium-activated potassium channel subunit alpha-1 (1179 aa).

Gly residues predominate over residues 1-24 (MANGGGGGGGSSGGGGGGGGGGSG). The disordered stretch occupies residues 1-62 (MANGGGGGGG…SSSSSSSSSV (62 aa)). Residues 1–87 (MANGGGGGGG…VPCDSRGQRM (87 aa)) lie on the Extracellular side of the membrane. Residues 41–61 (SSSSSSSSSSSSSSSSSSSSS) show a composition bias toward low complexity. A helical transmembrane segment spans residues 88-108 (WWAFLASSMVTFFGGLFIILL). Residues 109 to 179 (WRTLKYLWTV…MISAQTLTGR (71 aa)) lie on the Cytoplasmic side of the membrane. 3 S-palmitoyl cysteine lipidation sites follow: C119, C120, and C122. Residues 180-200 (VLVVLVFALSIGALVIYFIDS) form a helical membrane-spanning segment. The Extracellular portion of the chain corresponds to 201 to 215 (SNPIESCQNFYKDFT). The helical transmembrane segment at 216–236 (LQIDMAFNVFFLLYFGLRFIA) threads the bilayer. Over 237–240 (ANDK) the chain is Cytoplasmic. Residues 241–261 (LWFWLEVNSVVDFFTVPPVFV) traverse the membrane as a helical segment. At 262-265 (SVYL) the chain is on the extracellular side. Residues 266-286 (NRSWLGLRFLRALRLIQFSEI) traverse the membrane as a helical; Voltage-sensor segment. The Cytoplasmic segment spans residues 287-301 (LQFLNILKTSNSIKL). A helical transmembrane segment spans residues 302–322 (VNLLSIFISTWLTAAGFIHLV). At 323 to 336 (ENSGDPWENFQNNQ) the chain is on the extracellular side. Positions 337–359 (ALTYWECVYLLMVTMSTVGYGDV) form an intramembrane region, pore-forming. The Selectivity for potassium motif lies at 353 to 356 (TVGY). At 360–368 (YAKTTLGRL) the chain is on the extracellular side. Residues 369–389 (FMVFFILGGLAMFASYVPEII) form a helical membrane-spanning segment. The Cytoplasmic segment spans residues 390 to 1179 (ELIGNRKKYG…KQKYVQEERL (790 aa)). Residues 408-550 (RKHIVVCGHI…WNWKEGDDAI (143 aa)) enclose the RCK N-terminal 1 domain. E440, Q463, and E465 together coordinate Mg(2+). The tract at residues 557–577 (LGFIAQSCLAQGLSTMLANLF) is segment S7. The segment S8 stretch occupies residues 614–634 (LSFPTVCELCFVKLKLLMIAI). Residues 678–682 (CKACH) are heme-binding motif. The interval 702–730 (EQPSTLSPKKKQRNGGMRNSPNSSPKLMR) is disordered. T706 carries the phosphothreonine modification. Phosphoserine is present on residues S708, S721, and S725. The segment at 780-800 (VLSGHVVVCIFGDVSSALIGL) is segment S9. One can recognise an RCK N-terminal 2 domain in the interval 782–926 (SGHVVVCIFG…MDRSSPDNSP (145 aa)). T913 is modified (phosphothreonine). Residues S921 and S925 each carry the phosphoserine modification. Residues 946 to 968 (TELVNDTNVQFLDQDDDDDPDTE) carry the Calcium bowl motif. Q955, D958, D961, and D963 together coordinate Ca(2+). The segment at 975 to 995 (FACGTAFAVSVLDSLMSATYF) is segment S10. Low complexity predominate over residues 1129-1154 (RASLSHSSHSSQSSSKKSSSVHSIPS). The disordered stretch occupies residues 1129–1179 (RASLSHSSHSSQSSSKKSSSVHSIPSTANRQNRPKSRESRDKQKYVQEERL). Residues 1163–1179 (KSRESRDKQKYVQEERL) show a composition bias toward basic and acidic residues. Residues S1164 and S1167 each carry the phosphoserine modification.

Belongs to the potassium channel family. Calcium-activated (TC 1.A.1.3) subfamily. KCa1.1/KCNMA1 sub-subfamily. In terms of assembly, homotetramer; which constitutes the calcium-activated potassium channel. Interacts with beta subunits KCNMB1, KCNMB2, KCNMB3 and KCNMB4. Interacts with gamma subunits LRRC26, LRRC38, LRRC52 and LRRC55. Beta and gamma subunits are accessory, and modulate its activity. Interacts with RAB11B. Phosphorylated. Phosphorylation by kinases such as PKA and/or PKG. In smooth muscles, phosphorylation affects its activity. Post-translationally, palmitoylation by ZDHHC22 and ZDHHC23 within the intracellular linker between the S0 and S1 transmembrane domains regulates localization to the plasma membrane. Depalmitoylated by LYPLA1 and LYPLAL1, leading to retard exit from the trans-Golgi network.

It localises to the cell membrane. It is found in the endoplasmic reticulum membrane. The catalysed reaction is K(+)(in) = K(+)(out). Its activity is regulated as follows. Ethanol and carbon monoxide-bound heme increase channel activation. Heme inhibits channel activation. Potassium channel activated by both membrane depolarization or increase in cytosolic Ca(2+) that mediates export of K(+). It is also activated by the concentration of cytosolic Mg(2+). Its activation dampens the excitatory events that elevate the cytosolic Ca(2+) concentration and/or depolarize the cell membrane. It therefore contributes to repolarization of the membrane potential. Plays a key role in controlling excitability in a number of systems, such as regulation of the contraction of smooth muscle, the tuning of hair cells in the cochlea, regulation of transmitter release, and innate immunity. In smooth muscles, its activation by high level of Ca(2+), caused by ryanodine receptors in the sarcoplasmic reticulum, regulates the membrane potential. In cochlea cells, its number and kinetic properties partly determine the characteristic frequency of each hair cell and thereby helps to establish a tonotopic map. Kinetics of KCNMA1 channels are determined by alternative splicing, phosphorylation status and its combination with modulating beta subunits. Highly sensitive to both iberiotoxin (IbTx) and charybdotoxin (CTX). In terms of biological role, potassium channel activated by both membrane depolarization or increase in cytosolic Ca(2+) that mediates export of K(+). The polypeptide is Calcium-activated potassium channel subunit alpha-1 (KCNMA1) (Oryctolagus cuniculus (Rabbit)).